A 159-amino-acid polypeptide reads, in one-letter code: MMNRVVLVGRLTKDPDLRYTPAGAAVATFTLAVNRTFTNQQGEREADFIQCVVWRKPAENAANFLKKGSMAGVDGRIQTRNYEDSDGKRVFVTEVVAESVQFLEPRNHAEGATSNNYQNEANYSNNNKTSSYRADTSQKSDSFANEGKPIDINPDDLPF.

Residues 2-104 (MNRVVLVGRL…VVAESVQFLE (103 aa)) form the SSB domain. A disordered region spans residues 106–159 (RNHAEGATSNNYQNEANYSNNNKTSSYRADTSQKSDSFANEGKPIDINPDDLPF). Residues 114–127 (SNNYQNEANYSNNN) are compositionally biased toward low complexity. The segment covering 128 to 143 (KTSSYRADTSQKSDSF) has biased composition (polar residues).

In terms of assembly, homotetramer.

This is Single-stranded DNA-binding protein 2 (ssb2) from Listeria innocua serovar 6a (strain ATCC BAA-680 / CLIP 11262).